Here is a 934-residue protein sequence, read N- to C-terminus: Sorting nexin-14 (934 aa).

The next 2 membrane-spanning stretches (helical) occupy residues 27 to 47 (YPVI…LNQY) and 48 to 68 (LHIL…YCSL). The PXA domain occupies 129 to 303 (PSKVDASISE…MVLIFIDDSP (175 aa)). One can recognise an RGS domain in the interval 335–467 (DLKEIREQQD…CHSDEYFRHL (133 aa)). A PX domain is found at 557-677 (WTISIPYVDF…DFLSPFSMES (121 aa)).

This sequence belongs to the sorting nexin family.

The protein resides in the lysosome membrane. Its subcellular location is the late endosome membrane. It localises to the cell projection. The protein localises to the dendrite. Functionally, plays a role in maintaining normal neuronal excitability and synaptic transmission. May be involved in several stages of intracellular trafficking. Required for autophagosome clearance, possibly by mediating the fusion of lysosomes with autophagosomes. Binds phosphatidylinositol 3,5-bisphosphate (PtdIns(3,5)P2), a key component of late endosomes/lysosomes. Does not bind phosphatidylinositol 3-phosphate (PtdIns(3P)). The sequence is that of Sorting nexin-14 from Danio rerio (Zebrafish).